We begin with the raw amino-acid sequence, 198 residues long: Synaptobrevin homolog YKT6 (198 aa).

Residues 8-126 (VLYKGEAKVV…TIHYPALDGH (119 aa)) form the Longin domain. The v-SNARE coiled-coil homology domain occupies 138-198 (PMTKVQAELD…RKQNSCCAIM (61 aa)). Residue serine 159 is modified to Phosphoserine. A lipid anchor (S-palmitoyl cysteine) is attached at cysteine 194. Cysteine 195 carries the cysteine methyl ester modification. Residue cysteine 195 is the site of S-farnesyl cysteine attachment. A propeptide spans 196 to 198 (AIM) (removed in mature form).

It belongs to the synaptobrevin family. Identified in 2 different SNARE complexes; the first one composed of GOSR1, GOSR2 and STX5 and the second one composed of BET1L, GOSR1 and STX5. In terms of processing, palmitoylated; catalyzes its own palmitoylation. Palmitoylation is required for Golgi targeting. Farnesylation is required for Golgi targeting.

Its subcellular location is the cytoplasm. The protein resides in the cytosol. It localises to the cytoplasmic vesicle membrane. It is found in the golgi apparatus membrane. In terms of biological role, vesicular soluble NSF attachment protein receptor (v-SNARE) mediating vesicle docking and fusion to a specific acceptor cellular compartment. Functions in endoplasmic reticulum to Golgi transport; as part of a SNARE complex composed of GOSR1, GOSR2 and STX5. Functions in early/recycling endosome to TGN transport; as part of a SNARE complex composed of BET1L, GOSR1 and STX5. Has a S-palmitoyl transferase activity. The chain is Synaptobrevin homolog YKT6 (YKT6) from Homo sapiens (Human).